The chain runs to 46 residues: Large ribosomal subunit protein bL34 (46 aa).

Residues 1-17 show a composition bias toward basic residues; it reads MTKRTLRGSVRKKKRTS. The interval 1–26 is disordered; sequence MTKRTLRGSVRKKKRTSGFRARMETP.

The protein belongs to the bacterial ribosomal protein bL34 family.

This is Large ribosomal subunit protein bL34 (rpmH) from Pseudanabaena sp. (strain PCC 6903).